The following is a 345-amino-acid chain: Achaete-scute complex protein T4 (345 aa).

The segment covering 78-92 (SESVSSLSPGSSPAP) has biased composition (low complexity). The disordered stretch occupies residues 78-109 (SESVSSLSPGSSPAPYNVDQSQSVQRRNARER). The region spanning 99–162 (QSVQRRNARE…RIAVEYIRRL (64 aa)) is the bHLH domain.

As to quaternary structure, efficient DNA binding requires dimerization with another bHLH protein. Interacts with da (via bHLH motif). Interacts with Bap60. L(1)SC, SC and AC strongly label the presumptive stomatogastric nervous system, while ASE is more prominent in the presumptive procephalic lobe. Associates with the somatic nuclei through nuclear cycles 9 and 10. During nuclear cycle 11 distributes uniformly in the embryo.

AS-C proteins are involved in the determination of the neuronal precursors in the peripheral nervous system and the central nervous system. Also involved in sex determination and dosage compensation. The polypeptide is Achaete-scute complex protein T4 (sc) (Drosophila melanogaster (Fruit fly)).